Consider the following 360-residue polypeptide: Histidinol-phosphate aminotransferase (360 aa).

K222 bears the N6-(pyridoxal phosphate)lysine mark.

This sequence belongs to the class-II pyridoxal-phosphate-dependent aminotransferase family. Histidinol-phosphate aminotransferase subfamily. Pyridoxal 5'-phosphate serves as cofactor.

It carries out the reaction L-histidinol phosphate + 2-oxoglutarate = 3-(imidazol-4-yl)-2-oxopropyl phosphate + L-glutamate. It participates in amino-acid biosynthesis; L-histidine biosynthesis; L-histidine from 5-phospho-alpha-D-ribose 1-diphosphate: step 7/9. This chain is Histidinol-phosphate aminotransferase, found in Haloarcula marismortui (strain ATCC 43049 / DSM 3752 / JCM 8966 / VKM B-1809) (Halobacterium marismortui).